A 347-amino-acid chain; its full sequence is Lipoyl synthase (347 aa).

[4Fe-4S] cluster is bound by residues cysteine 55, cysteine 60, cysteine 66, cysteine 81, cysteine 85, cysteine 88, and serine 292. A Radical SAM core domain is found at 67 to 281; it reads WEDREATFLI…RDYGHDIGFA (215 aa).

It belongs to the radical SAM superfamily. Lipoyl synthase family. Requires [4Fe-4S] cluster as cofactor.

The protein localises to the cytoplasm. It carries out the reaction [[Fe-S] cluster scaffold protein carrying a second [4Fe-4S](2+) cluster] + N(6)-octanoyl-L-lysyl-[protein] + 2 oxidized [2Fe-2S]-[ferredoxin] + 2 S-adenosyl-L-methionine + 4 H(+) = [[Fe-S] cluster scaffold protein] + N(6)-[(R)-dihydrolipoyl]-L-lysyl-[protein] + 4 Fe(3+) + 2 hydrogen sulfide + 2 5'-deoxyadenosine + 2 L-methionine + 2 reduced [2Fe-2S]-[ferredoxin]. It functions in the pathway protein modification; protein lipoylation via endogenous pathway; protein N(6)-(lipoyl)lysine from octanoyl-[acyl-carrier-protein]: step 2/2. Its function is as follows. Catalyzes the radical-mediated insertion of two sulfur atoms into the C-6 and C-8 positions of the octanoyl moiety bound to the lipoyl domains of lipoate-dependent enzymes, thereby converting the octanoylated domains into lipoylated derivatives. This Corynebacterium kroppenstedtii (strain DSM 44385 / JCM 11950 / CIP 105744 / CCUG 35717) protein is Lipoyl synthase.